The primary structure comprises 392 residues: B2 bradykinin receptor (392 aa).

Residues 1 to 61 (MPCSWKLLGF…EWWSWLNAIQ (61 aa)) lie on the Extracellular side of the membrane. Residues Asn-29 and Asn-40 are each glycosylated (N-linked (GlcNAc...) asparagine). A helical transmembrane segment spans residues 62 to 85 (APFLWVLFLLAALENLFVLSVFFL). The Cytoplasmic portion of the chain corresponds to 86–94 (HKNSCTVAE). Residues 95 to 119 (IYLGNLAAADLILACGLPFWAITIA) traverse the membrane as a helical segment. The Extracellular segment spans residues 120–132 (NNFDWVFGEVLCR). Cysteines 131 and 212 form a disulfide. Residues 133–154 (VVNTMIYMNLYSSICFLMLVSI) traverse the membrane as a helical segment. At 155 to 176 (DRYLALVKTMSMGRMRGVRWAK) the chain is on the cytoplasmic side. Tyr-157 carries the phosphotyrosine modification. The chain crosses the membrane as a helical span at residues 177–199 (LYSLVIWGCTLLLSSPMLVFRTM). Topologically, residues 200–222 (REYSEEGHNVTACVIVYPSRSWE) are extracellular. N-linked (GlcNAc...) asparagine glycosylation is present at Asn-208. A helical transmembrane segment spans residues 223-249 (VFTNVLLNLVGFLLPLSVITFCTVRIL). Residues 250-268 (QVLRNNEMKKFKEVQTERK) are Cytoplasmic-facing. Residues 269 to 293 (ATVLVLAVLGLFVLCWVPFQISTFL) form a helical membrane-spanning segment. Residues 294–312 (DTLLRLGVLSGCWDEHAVD) lie on the Extracellular side of the membrane. The chain crosses the membrane as a helical span at residues 313–336 (VITQISSYVAYSNSGLNPLVYVIV). Residues 337 to 392 (GKRFRKKSREVYRVLCQKGGCMGEPVQMENSMGTLRTSISVERQIHKLQDWAGKKQ) lie on the Cytoplasmic side of the membrane. Phosphotyrosine is present on Tyr-348. The S-palmitoyl cysteine moiety is linked to residue Cys-352. Position 367 is a phosphoserine (Ser-367). Thr-370 carries the phosphothreonine modification. Phosphoserine; by GRK6 is present on residues Ser-374 and Ser-376.

This sequence belongs to the G-protein coupled receptor 1 family. Bradykinin receptor subfamily. BDKRB2 sub-subfamily. In terms of assembly, forms a complex with PECAM1 and GNAQ. Interacts with PECAM1.

Its subcellular location is the cell membrane. In terms of biological role, receptor for bradykinin. It is associated with G proteins that activate a phosphatidylinositol-calcium second messenger system. The sequence is that of B2 bradykinin receptor (Bdkrb2) from Mus musculus (Mouse).